We begin with the raw amino-acid sequence, 710 residues long: Polyribonucleotide nucleotidyltransferase (710 aa).

Residues aspartate 489 and aspartate 495 each contribute to the Mg(2+) site. Residues 556-615 enclose the KH domain; it reads PKIDTIKIDVDKIKVVIGKGGETIDKIIAETGVKIDIDDEGNVSIYSSDQAAIDRTKEII. The region spanning 625-693 is the S1 motif domain; sequence GEVYHAKVIR…EKGRVDASMK (69 aa).

It belongs to the polyribonucleotide nucleotidyltransferase family. The cofactor is Mg(2+).

Its subcellular location is the cytoplasm. It catalyses the reaction RNA(n+1) + phosphate = RNA(n) + a ribonucleoside 5'-diphosphate. In terms of biological role, involved in mRNA degradation. Catalyzes the phosphorolysis of single-stranded polyribonucleotides processively in the 3'- to 5'-direction. In Streptococcus pyogenes serotype M3 (strain ATCC BAA-595 / MGAS315), this protein is Polyribonucleotide nucleotidyltransferase.